We begin with the raw amino-acid sequence, 168 residues long: Phosphopantetheine adenylyltransferase (168 aa).

Residue serine 8 participates in substrate binding. ATP is bound by residues 8-9 (SF) and histidine 16. Substrate-binding residues include lysine 40, threonine 72, and arginine 86. ATP is bound by residues 87–89 (GLR), glutamate 97, and 122–128 (YSFLSSS).

This sequence belongs to the bacterial CoaD family. Homohexamer. It depends on Mg(2+) as a cofactor.

Its subcellular location is the cytoplasm. It catalyses the reaction (R)-4'-phosphopantetheine + ATP + H(+) = 3'-dephospho-CoA + diphosphate. The protein operates within cofactor biosynthesis; coenzyme A biosynthesis; CoA from (R)-pantothenate: step 4/5. Reversibly transfers an adenylyl group from ATP to 4'-phosphopantetheine, yielding dephospho-CoA (dPCoA) and pyrophosphate. The chain is Phosphopantetheine adenylyltransferase from Thermosynechococcus vestitus (strain NIES-2133 / IAM M-273 / BP-1).